The sequence spans 758 residues: Catalase-peroxidase (758 aa).

Positions 1-10 (MSDTQDNAPA) are enriched in polar residues. Positions 1-59 (MSDTQDNAPASAQGVDQKAAAGCPVAHDSVTAHGSESESPAIDSPTPHSGGRPRTNRDW) are disordered. Residues 128–250 (WHAAGTYRID…VGATEMGLIY (123 aa)) constitute a cross-link (tryptophyl-tyrosyl-methioninium (Trp-Tyr) (with M-276)). The Proton acceptor role is filled by His129. The segment at residues 250 to 276 (YVNPEGPRGNADPAAAAHFIRETFRRM) is a cross-link (tryptophyl-tyrosyl-methioninium (Tyr-Met) (with W-128)). Residue His291 coordinates heme b.

This sequence belongs to the peroxidase family. Peroxidase/catalase subfamily. In terms of assembly, homodimer or homotetramer. Heme b is required as a cofactor. Formation of the three residue Trp-Tyr-Met cross-link is important for the catalase, but not the peroxidase activity of the enzyme.

The enzyme catalyses H2O2 + AH2 = A + 2 H2O. The catalysed reaction is 2 H2O2 = O2 + 2 H2O. Its function is as follows. Bifunctional enzyme with both catalase and broad-spectrum peroxidase activity. This is Catalase-peroxidase from Salinispora arenicola (strain CNS-205).